Here is a 615-residue protein sequence, read N- to C-terminus: uncharacterized protein (615 aa).

Position 48 is a phosphoserine (S48). Positions D424–S433 are enriched in acidic residues. Residues D424–V615 form a disordered region. Composition is skewed to basic and acidic residues over residues D439–G476, D484–A496, E504–A521, and E529–K561. Composition is skewed to basic residues over residues K579–K589 and Y606–V615.

This is an uncharacterized protein from Arabidopsis thaliana (Mouse-ear cress).